The chain runs to 474 residues: Dihydrolipoyl dehydrogenase (474 aa).

FAD contacts are provided by residues 36 to 45 (ERYNTLGGVC), K54, and G117. C45 and C50 are disulfide-bonded. Residues 182 to 186 (GGGII) and E205 contribute to the NAD(+) site. Position 220 is an N6-acetyllysine (K220). Residues V238 and 270–273 (AIGR) each bind NAD(+). The FAD site is built by D313 and A321. Catalysis depends on H445, which acts as the Proton acceptor.

Belongs to the class-I pyridine nucleotide-disulfide oxidoreductase family. Homodimer. It depends on FAD as a cofactor.

Its subcellular location is the cytoplasm. The enzyme catalyses N(6)-[(R)-dihydrolipoyl]-L-lysyl-[protein] + NAD(+) = N(6)-[(R)-lipoyl]-L-lysyl-[protein] + NADH + H(+). Lipoamide dehydrogenase is a component of the glycine cleavage system as well as of the alpha-ketoacid dehydrogenase complexes. This chain is Dihydrolipoyl dehydrogenase (lpdA), found in Shigella flexneri.